Here is a 102-residue protein sequence, read N- to C-terminus: Redox- and pH-responsive transcriptional regulator WhiB3 (102 aa).

Residues 22–86 enclose the 4Fe-4S Wbl-type domain; the sequence is LCRGMDSSMF…GGLSESERDL (65 aa). Residues cysteine 23, cysteine 53, cysteine 56, and cysteine 62 each coordinate [4Fe-4S] cluster.

Belongs to the WhiB family. In terms of assembly, homodimer. Interacts with the C-terminal 54 residues of sigma factor SigA (RpoV). [4Fe-4S] cluster is required as a cofactor. In terms of processing, the 4Fe-4S cluster interacts with NO, forming a protein-bound dinitrosyliron dithiol complex. Post-translationally, the 4Fe-4S cluster interacts with O(2), leading to its degradation. Cluster loss takes about 2 hours. Once in the apo-form the cysteines oxidize to form 2 intramolecular disulfide bonds.

It localises to the cytoplasm. Its function is as follows. A redox-sensitive transcriptional regulator. Maintains intracellular redox homeostasis by regulating catabolic metabolism and polyketide biosynthesis. Regulates expression of the redox buffer ergothioneine (ERG) in a carbon-source-dependent manner; loss of ERG or mycothiol (MSH, the other major redox buffer in this bacteria) leads to respiratory alterations and bioenergetic deficiencies that negatively impact virulence. In response to low external pH (like that found in host macrophage phagosomes) alters endogenous gene expression leading to acid resistance; MSH and WhiB3 are probably part of a regulatory circuit that mediates gene expression upon acid stress. Regulates pathogenic lipid synthesis, coordinating proprionate flux (and other host-derived fatty acid oxidation intermediates) into methyl-branched fatty acids (polyacyltrehalose, phthiocerol dimycocerosates, sulfolipids) and the storage lipid triacylglycerol, functioning as reductive sink. During intracellular growth M.tuberculosis uses host fatty acids as an energy source, generating large quantities of proprionate and NADH/NADPH, which are toxic and highly reducing respectively. WhiB3 is thought to help dissipate proprionate and NADH/NADPH by switching to the in vivo carbon source and via lipid anabolism. Responds to NO and O(2). Regulates expression of genes encoding modular polyketide synthases such as pks2, pks3 and fbpA. The oxidized apo-form of WhiB3 binds DNA (with 2 intramolecular disulfide bonds); holo-WhiB3 (with the 4Fe-4S cluster) binds DNA considerably less well. Discriminates poorly between specific and non-specific DNA-binding. Plays a role in virulence and nutritional stress. In its apo-form can act as a protein disulfide reductase. In terms of biological role, may respond to mycothiol (MSH) redox potential (E-MSH) which decreases at pH 4.5 for up to 72 hours, indicative of cellular reductive stress; deletion of whiB3 leads to a lesser E-MSH at 72 hours, indicative of cellular oxidative stress. Probably via its effects on production of polyketide lipids, regulates host gene expression, leading to blockage of phagosome maturation. Equilibration of extra- and intracytoplasmic pH kills bacteria. The polypeptide is Redox- and pH-responsive transcriptional regulator WhiB3 (whiB3) (Mycobacterium tuberculosis (strain ATCC 25618 / H37Rv)).